The primary structure comprises 94 residues: Integration host factor subunit beta (94 aa).

This sequence belongs to the bacterial histone-like protein family. As to quaternary structure, heterodimer of an alpha and a beta chain.

Functionally, this protein is one of the two subunits of integration host factor, a specific DNA-binding protein that functions in genetic recombination as well as in transcriptional and translational control. This is Integration host factor subunit beta from Actinobacillus succinogenes (strain ATCC 55618 / DSM 22257 / CCUG 43843 / 130Z).